Consider the following 238-residue polypeptide: MTPDEFLSALTEFDIQLSDKQIKQFERYFELLVEWNEKINLTAITEKNEVYLKHFYDSIAPILYGLITDQPVSILDIGAGAGFPSLPMKIIFPELKVTIIDSLNKRINFLSLLTEELGLENVTLLHGRAEDFGQDANYRGTFDFVTARAVARLSVLTEFTIPFLKKNGILLSLKAAQFEEELNDAKKAIATLGGKFIKEVAYELPNGDERHIALIEKKKETPKKYPRKAGTPAKNPIK.

S-adenosyl-L-methionine is bound by residues G78, F83, 129–130 (AE), and R148. The interval 216–238 (EKKKETPKKYPRKAGTPAKNPIK) is disordered.

This sequence belongs to the methyltransferase superfamily. RNA methyltransferase RsmG family.

It localises to the cytoplasm. Its function is as follows. Specifically methylates the N7 position of a guanine in 16S rRNA. The chain is Ribosomal RNA small subunit methyltransferase G from Lactococcus lactis subsp. lactis (strain IL1403) (Streptococcus lactis).